Consider the following 361-residue polypeptide: 45 kDa calcium-binding protein (361 aa).

Positions 1 to 35 (MVWLVAMTPRQSSLCGLAAHGLWFLGLVLLMDATA) are cleaved as a signal peptide. Asn39 is a glycosylation site (N-linked (GlcNAc...) asparagine). EF-hand domains are found at residues 97-132 (RSRR…KTAE) and 136-171 (EAVK…SKGH). Ser98 carries the post-translational modification Phosphoserine. Asp110, Asn112, Asp114, Arg116, Glu121, Asp149, Asp151, Asp153, His155, and Glu160 together coordinate Ca(2+). Residue Thr192 is modified to Phosphothreonine. 4 EF-hand domains span residues 196–231 (LGNL…HSRG), 232–267 (MLKF…TVEN), 277–312 (WVKD…MNEY), and 313–348 (NALN…FTGS). A Ca(2+)-binding site is contributed by Asp212. Thr216 carries the post-translational modification Phosphothreonine. Residues Glu219, Asp245, Asp247, Asp249, Gln251, and Glu256 each coordinate Ca(2+). Position 264 is a phosphothreonine (Thr264). Ca(2+) contacts are provided by Asp290, Asn292, and Asp294. The residue at position 298 (Thr298) is a Phosphothreonine. Residues Glu301, Asp326, Asn328, Asn330, His332, and Glu337 each coordinate Ca(2+). The tract at residues 308-361 (PMNEYNALNEAKQMIAIADENQNHHLEPEEILKYSEFFTGSKLMDYARNVHEEF) is necessary for intracellular retention in Golgi apparatus lumen.

Belongs to the CREC family. In terms of tissue distribution, ubiquitous.

The protein resides in the golgi apparatus lumen. May regulate calcium-dependent activities in the endoplasmic reticulum lumen or post-ER compartment. The protein is 45 kDa calcium-binding protein (Sdf4) of Mus musculus (Mouse).